Reading from the N-terminus, the 2080-residue chain is Dysferlin (2080 aa).

Positions 1 to 101 constitute a C2 1 domain; the sequence is MLRVFILYAE…LATPSLSASF (101 aa). Residues 1–2046 are Cytoplasmic-facing; the sequence is MLRVFILYAE…FILWRRFRWA (2046 aa). Positions 18, 19, 21, and 40 each coordinate Ca(2+). Residues 132 to 144 are compositionally biased toward pro residues; it reads LFPPPTPLEPSPT. Residues 132 to 215 are disordered; it reads LFPPPTPLEP…APTSRKLLSD (84 aa). A compositionally biased stretch (acidic residues) spans 155 to 172; the sequence is GGEEDTEDQGLTGDEAEP. Position 166 is a phosphothreonine (T166). 2 positions are modified to phosphoserine: T166 and G167. Phosphothreonine is present on residues Y197 and P198. 6 consecutive C2 domains span residues 203–321, 360–496, 1136–1262, 1310–1438, 1561–1679, and 1795–1943; these read KRSA…RKWL, DKED…EEEP, GVNR…PLTR, PPPQ…AESP, PMPP…ARCG, and GRPG…KKCS. Residues D1168, D1174, D1230, and D1232 each coordinate Ca(2+). D1594, D1600, D1649, D1651, D1914, S1917, and D1920 together coordinate Ca(2+). Positions 1995–2017 are disordered; that stretch reads SEHEERPAGQGRDEPNMNPKLED. Residues 2047–2067 traverse the membrane as a helical segment; the sequence is IILFIILFILLLFLAIFIYAF. At 2068–2080 the chain is on the extracellular side; the sequence is PNYAAMKLVKPFS.

The protein belongs to the ferlin family. Interacts with CACNA1S. Interacts with ANXA1; the interaction is Ca(2+)- and injury state-dependent. Interacts with ANXA2; the interaction is Ca(2+)- and injury state-dependent. Interacts with CACNA1S and PARVB. Interacts with TRIM72/MG53; interaction is required for transport to sites of cell injury during repair patch formation. Interacts with RIPOR2; this interaction occurs during early myogenic differentiation. Interacts with CAV3 and PARVB. Interacts with AHNAK; the interaction is direct and Ca(2+)-independent. Interacts with AHNAK2; the interaction is direct and Ca(2+)-independent. Ca(2+) serves as cofactor. Expressed in skeletal muscle, myoblast, myotube and in the syncytiotrophoblast (STB) of the placenta (at protein level). Ubiquitous. Highly expressed in skeletal muscle. Also found in heart, brain, spleen, intestine, placenta and at lower levels in liver, lung, kidney and pancreas.

It is found in the cell membrane. The protein localises to the sarcolemma. Its subcellular location is the cytoplasmic vesicle membrane. Its function is as follows. Key calcium ion sensor involved in the Ca(2+)-triggered synaptic vesicle-plasma membrane fusion. Plays a role in the sarcolemma repair mechanism of both skeletal muscle and cardiomyocytes that permits rapid resealing of membranes disrupted by mechanical stress. The protein is Dysferlin (DYSF) of Homo sapiens (Human).